The following is an 843-amino-acid chain: Protein P (843 aa).

The segment at 1 to 177 (MPLSYPHFRK…FCGSPYSWEQ (177 aa)) is terminal protein domain (TP). The segment at 178 to 346 (ELQHGSTSIN…YCLSHIINLL (169 aa)) is spacer. Disordered stretches follow at residues 180–221 (QHGS…FQQS) and 282–313 (REKT…GSVR). Residues 196–221 (SLCTQSSGILSRPSAGSSIQGKFQQS) show a composition bias toward polar residues. Residues 347 to 690 (EDWGPCYEHG…YMHLYPVARQ (344 aa)) form a polymerase/reverse transcriptase domain (RT) region. In terms of domain architecture, Reverse transcriptase spans 357 to 600 (QHHIRTPRTP…YTLNFMGYVI (244 aa)). Mg(2+) is bound by residues D429, D551, and D552.

The protein belongs to the hepadnaviridae P protein family.

The enzyme catalyses DNA(n) + a 2'-deoxyribonucleoside 5'-triphosphate = DNA(n+1) + diphosphate. The catalysed reaction is Endonucleolytic cleavage to 5'-phosphomonoester.. Activated by host HSP70 and HSP40 in vitro to be able to bind the epsilon loop of the pgRNA. Because deletion of the RNase H region renders the protein partly chaperone-independent, the chaperones may be needed indirectly to relieve occlusion of the RNA-binding site by this domain. Inhibited by several reverse-transcriptase inhibitors: Lamivudine, Adefovir and Entecavir. Multifunctional enzyme that converts the viral RNA genome into dsDNA in viral cytoplasmic capsids. This enzyme displays a DNA polymerase activity that can copy either DNA or RNA templates, and a ribonuclease H (RNase H) activity that cleaves the RNA strand of RNA-DNA heteroduplexes in a partially processive 3'- to 5'-endonucleasic mode. Neo-synthesized pregenomic RNA (pgRNA) are encapsidated together with the P protein, and reverse-transcribed inside the nucleocapsid. Initiation of reverse-transcription occurs first by binding the epsilon loop on the pgRNA genome, and is initiated by protein priming, thereby the 5'-end of (-)DNA is covalently linked to P protein. Partial (+)DNA is synthesized from the (-)DNA template and generates the relaxed circular DNA (RC-DNA) genome. After budding and infection, the RC-DNA migrates in the nucleus, and is converted into a plasmid-like covalently closed circular DNA (cccDNA). The activity of P protein does not seem to be necessary for cccDNA generation, and is presumably released from (+)DNA by host nuclear DNA repair machinery. The chain is Protein P from Homo sapiens (Human).